The sequence spans 144 residues: Angiogenin-4 (144 aa).

The first 24 residues, 1–24, serve as a signal peptide directing secretion; it reads MTMSPCPLLLVFVLGLVVIPPTLA. His36 acts as the Proton acceptor in catalysis. 3 disulfide bridges follow: Cys49–Cys103, Cys62–Cys114, and Cys80–Cys129. Positions 54-58 match the Nucleolar localization signal motif; sequence KERKL. His136 functions as the Proton donor in the catalytic mechanism.

Belongs to the pancreatic ribonuclease family. As to expression, detected in small intestine, caecum and colon, with the highest expression in Paneth cells in the intestinal epithelium.

It is found in the secreted. The protein resides in the cytoplasmic vesicle. The protein localises to the secretory vesicle lumen. It localises to the nucleus. Its subcellular location is the nucleolus. Functionally, has bactericidal activity against E.faecalis and L.monocytogenes, but not against L.innocua and E.coli. Promotes angiogenesis (in vitro). Has low ribonuclease activity (in vitro). Promotes proliferation of melanoma cells, but not of endothelial cells or fibroblasts (in vitro). The chain is Angiogenin-4 (Ang4) from Mus musculus (Mouse).